The primary structure comprises 347 residues: CD5 antigen-like (347 aa).

Residues 1–19 (MALLFSLILAICTRPGFLA) form the signal peptide. SRCR domains lie at 24 to 125 (VRLV…ASCE), 138 to 239 (VRLA…VECE), and 244 to 346 (LRLV…VICS). 11 disulfides stabilise this stretch: Cys33–Cys67, Cys49–Cys114, Cys62–Cys124, Cys96–Cys106, Cys163–Cys228, Cys176–Cys238, Cys208–Cys218, Cys253–Cys287, Cys269–Cys335, Cys282–Cys345, and Cys315–Cys325.

Interacts with FASN; the interaction is direct. Interacts (via SRCR2 and SRCR3) with pentameric IgM (via Fc region); disulfide-linked. Not N-glycosylated. Probably not O-glycosylated. Expressed in spleen, lymph node, thymus, bone marrow, and fetal liver, but not in non-lymphoid tissues.

The protein resides in the secreted. It localises to the cytoplasm. Secreted protein that acts as a key regulator of lipid synthesis: mainly expressed by macrophages in lymphoid and inflamed tissues and regulates mechanisms in inflammatory responses, such as infection or atherosclerosis. Able to inhibit lipid droplet size in adipocytes. Following incorporation into mature adipocytes via CD36-mediated endocytosis, associates with cytosolic FASN, inhibiting fatty acid synthase activity and leading to lipolysis, the degradation of triacylglycerols into glycerol and free fatty acids (FFA). CD5L-induced lipolysis occurs with progression of obesity: participates in obesity-associated inflammation following recruitment of inflammatory macrophages into adipose tissues, a cause of insulin resistance and obesity-related metabolic disease. Regulation of intracellular lipids mediated by CD5L has a direct effect on transcription regulation mediated by nuclear receptors ROR-gamma (RORC). Acts as a key regulator of metabolic switch in T-helper Th17 cells. Regulates the expression of pro-inflammatory genes in Th17 cells by altering the lipid content and limiting synthesis of cholesterol ligand of RORC, the master transcription factor of Th17-cell differentiation. CD5L is mainly present in non-pathogenic Th17 cells, where it decreases the content of polyunsaturated fatty acyls (PUFA), affecting two metabolic proteins MSMO1 and CYP51A1, which synthesize ligands of RORC, limiting RORC activity and expression of pro-inflammatory genes. Participates in obesity-associated autoimmunity via its association with IgM, interfering with the binding of IgM to Fcalpha/mu receptor and enhancing the development of long-lived plasma cells that produce high-affinity IgG autoantibodies. Also acts as an inhibitor of apoptosis in macrophages: promotes macrophage survival from the apoptotic effects of oxidized lipids in case of atherosclerosis. Involved in early response to microbial infection against various pathogens by acting as a pattern recognition receptor and by promoting autophagy. The polypeptide is CD5 antigen-like (CD5L) (Homo sapiens (Human)).